The following is a 365-amino-acid chain: 1-deoxy-D-xylulose 5-phosphate reductoisomerase (365 aa).

NADPH is bound by residues Thr-7, Gly-8, Ser-9, Ile-10, Ala-31, Lys-32, Asn-33, and Asn-114. Lys-115 contacts 1-deoxy-D-xylulose 5-phosphate. Glu-116 contributes to the NADPH binding site. Residue Asp-134 coordinates Mn(2+). The 1-deoxy-D-xylulose 5-phosphate site is built by Ser-135, Glu-136, Ser-158, and His-181. Glu-136 serves as a coordination point for Mn(2+). Gly-187 is a binding site for NADPH. 4 residues coordinate 1-deoxy-D-xylulose 5-phosphate: Ser-194, Asn-199, Lys-200, and Glu-203. Position 203 (Glu-203) interacts with Mn(2+).

It belongs to the DXR family. Requires Mg(2+) as cofactor. It depends on Mn(2+) as a cofactor.

It carries out the reaction 2-C-methyl-D-erythritol 4-phosphate + NADP(+) = 1-deoxy-D-xylulose 5-phosphate + NADPH + H(+). Its pathway is isoprenoid biosynthesis; isopentenyl diphosphate biosynthesis via DXP pathway; isopentenyl diphosphate from 1-deoxy-D-xylulose 5-phosphate: step 1/6. Functionally, catalyzes the NADPH-dependent rearrangement and reduction of 1-deoxy-D-xylulose-5-phosphate (DXP) to 2-C-methyl-D-erythritol 4-phosphate (MEP). The protein is 1-deoxy-D-xylulose 5-phosphate reductoisomerase of Campylobacter curvus (strain 525.92).